The primary structure comprises 138 residues: MLSPKRTKFRKAHKGRIHGLAKSGTQLNFGAFGLKALEPERITARQIEASRRAITRAMKRAGRVWIRIFPDTPVSTKPAEVRMGSGKGNPEYWAARVKPGRILFEIEGVPPEVAKLALSLGAAKLPIKTKFVQRIGDA.

Belongs to the universal ribosomal protein uL16 family. In terms of assembly, part of the 50S ribosomal subunit.

Binds 23S rRNA and is also seen to make contacts with the A and possibly P site tRNAs. This chain is Large ribosomal subunit protein uL16, found in Gluconobacter oxydans (strain 621H) (Gluconobacter suboxydans).